The following is a 308-amino-acid chain: Protein FdhE homolog (308 aa).

Belongs to the FdhE family.

It is found in the cytoplasm. Its function is as follows. Necessary for formate dehydrogenase activity. The polypeptide is Protein FdhE homolog (Edwardsiella ictaluri (strain 93-146)).